We begin with the raw amino-acid sequence, 225 residues long: UPF0758 protein Swoo_4561 (225 aa).

An MPN domain is found at isoleucine 102 to isoleucine 224. 3 residues coordinate Zn(2+): histidine 173, histidine 175, and aspartate 186. Positions histidine 173–aspartate 186 match the JAMM motif motif.

It belongs to the UPF0758 family.

The protein is UPF0758 protein Swoo_4561 of Shewanella woodyi (strain ATCC 51908 / MS32).